The sequence spans 312 residues: Large ribosomal subunit protein uL10 (312 aa).

Positions 287-312 are disordered; sequence AAAAPAAKKEEPKEESDDDMGFGLFD.

It belongs to the universal ribosomal protein uL10 family. In terms of assembly, P0 forms a pentameric complex by interaction with dimers of P1 and P2. In terms of processing, phosphorylated.

Functionally, ribosomal protein P0 is the functional equivalent of E.coli protein L10. The sequence is that of Large ribosomal subunit protein uL10 from Caenorhabditis elegans.